An 863-amino-acid polypeptide reads, in one-letter code: DNA replication licensing factor mcm4-B (863 aa).

The segment at 1-130 (MSSPTSTPSR…ARKVKQVDLH (130 aa)) is disordered. Composition is skewed to polar residues over residues 54–64 (SPSGDVQSPSG) and 84–99 (LDLS…SSRV). The segment at 306–331 (CQVCAFTTRVEIDRGRIAEPSVCKHC) adopts a C4-type zinc-finger fold. One can recognise an MCM domain in the interval 458–667 (IYERLAAALA…YDRRLAHHLV (210 aa)). ATP contacts are provided by tyrosine 471, arginine 497, lysine 516, serine 517, asparagine 618, arginine 643, arginine 732, and glutamate 735. Residues 642–645 (SRFD) carry the Arginine finger motif.

The protein belongs to the MCM family. Component of the mcm2-7 complex (RLF-M). The complex forms a toroidal hexameric ring with the proposed subunit order mcm2-mcm6-mcm4-mcm7-mcm3-mcm5. The heterodimer of mmcm3/mcm5 interacts with mcm4, mmcm6, mcm7 and weakly with mcm2. Begins to associate with zmcm6 at the neurula stage. Component of the CMG helicase complex, composed of the mcm2-7 complex, the GINS complex and cdc45. Hyperphosphorylated during mitosis in a mechanism requiring cdc2-cyclin B and other kinases. Undergoes dephosphorylation after exiting mitosis, existing in a partially phosphorylated state in the cytosolic interphase mcm complex which associates with the pre-replication complexes (pre-Rcs). Complete dephosphorylation inactivates the mcm complex, preventing its binding to chromatin. Becomes actively phosphorylated during S phase once the mcm complex is assembled on the chromatin. This chromatin-associated phosphorylation occurs during the activation of the pre-Rcs and is independent of cdks. Phosphorylated by the cdc7-dbf4b complex.

It is found in the nucleus. The protein resides in the chromosome. It catalyses the reaction ATP + H2O = ADP + phosphate + H(+). Acts as a component of the MCM2-7 complex (MCM complex) which is the replicative helicase essential for 'once per cell cycle' DNA replication initiation and elongation in eukaryotic cells. Core component of CDC45-MCM-GINS (CMG) helicase, the molecular machine that unwinds template DNA during replication, and around which the replisome is built. The active ATPase sites in the MCM2-7 ring are formed through the interaction surfaces of two neighboring subunits such that a critical structure of a conserved arginine finger motif is provided in trans relative to the ATP-binding site of the Walker A box of the adjacent subunit. The six ATPase active sites, however, are likely to contribute differentially to the complex helicase activity. This chain is DNA replication licensing factor mcm4-B (mcm4-b), found in Xenopus laevis (African clawed frog).